A 339-amino-acid polypeptide reads, in one-letter code: Anthranilate phosphoribosyltransferase (339 aa).

5-phospho-alpha-D-ribose 1-diphosphate-binding positions include Gly82, 85–86, Thr90, 92–95, 110–118, and Ser122; these read GD, NIST, and KHGNRSASG. Gly82 lines the anthranilate pocket. Ser94 contributes to the Mg(2+) binding site. Anthranilate is bound at residue Asn113. Anthranilate is bound at residue Arg168. Residues Asp226 and Glu227 each coordinate Mg(2+).

It belongs to the anthranilate phosphoribosyltransferase family. In terms of assembly, homodimer. The cofactor is Mg(2+).

It carries out the reaction N-(5-phospho-beta-D-ribosyl)anthranilate + diphosphate = 5-phospho-alpha-D-ribose 1-diphosphate + anthranilate. Its pathway is amino-acid biosynthesis; L-tryptophan biosynthesis; L-tryptophan from chorismate: step 2/5. In terms of biological role, catalyzes the transfer of the phosphoribosyl group of 5-phosphorylribose-1-pyrophosphate (PRPP) to anthranilate to yield N-(5'-phosphoribosyl)-anthranilate (PRA). The polypeptide is Anthranilate phosphoribosyltransferase (Methanosphaerula palustris (strain ATCC BAA-1556 / DSM 19958 / E1-9c)).